A 194-amino-acid chain; its full sequence is Orotate phosphoribosyltransferase (194 aa).

5-phospho-alpha-D-ribose 1-diphosphate contacts are provided by residues lysine 98 and 122 to 130 (EDVLTTGGS). The orotate site is built by threonine 126 and arginine 154.

This sequence belongs to the purine/pyrimidine phosphoribosyltransferase family. PyrE subfamily. Homodimer. Mg(2+) serves as cofactor.

The enzyme catalyses orotidine 5'-phosphate + diphosphate = orotate + 5-phospho-alpha-D-ribose 1-diphosphate. The protein operates within pyrimidine metabolism; UMP biosynthesis via de novo pathway; UMP from orotate: step 1/2. Its function is as follows. Catalyzes the transfer of a ribosyl phosphate group from 5-phosphoribose 1-diphosphate to orotate, leading to the formation of orotidine monophosphate (OMP). This chain is Orotate phosphoribosyltransferase, found in Deinococcus radiodurans (strain ATCC 13939 / DSM 20539 / JCM 16871 / CCUG 27074 / LMG 4051 / NBRC 15346 / NCIMB 9279 / VKM B-1422 / R1).